A 352-amino-acid polypeptide reads, in one-letter code: Ion-translocating oxidoreductase complex subunit D (352 aa).

4 consecutive transmembrane segments (helical) span residues 20–40, 44–64, 78–109, and 123–143; these read IMLLVLIAALPGVAAQTWFFG, LFQIVLAAVTALFAEAIVLSL, ALLTGLLLAVSIPPLAPWWMIVLGTGFAIIIA, and PAMIGYVVLLISFPVQMTSWL. Residue Thr187 is modified to FMN phosphoryl threonine. Transmembrane regions (helical) follow at residues 214–234, 242–262, 267–287, 301–321, and 322–342; these read VLAGVGWQWVNLAWLVGGVFL, WHIPVSFLVTLALCATLGWLF, LASPQLHLLSGATMLGAFFIL, LIFGALAGVLVWLIRSFGGYP, and DGVAFAVLLANITVPLIDYYT.

Belongs to the NqrB/RnfD family. The complex is composed of six subunits: RsxA, RsxB, RsxC, RsxD, RsxE and RsxG. FMN is required as a cofactor.

It is found in the cell inner membrane. Functionally, part of a membrane-bound complex that couples electron transfer with translocation of ions across the membrane. Required to maintain the reduced state of SoxR. This Salmonella arizonae (strain ATCC BAA-731 / CDC346-86 / RSK2980) protein is Ion-translocating oxidoreductase complex subunit D.